Consider the following 418-residue polypeptide: Histidinol dehydrogenase (418 aa).

Residues Tyr119, Gln180, and Asn203 each contribute to the NAD(+) site. The substrate site is built by Thr226, Gln248, and His251. Zn(2+) is bound by residues Gln248 and His251. Catalysis depends on proton acceptor residues Glu316 and His317. Substrate-binding residues include His317, Asp350, Glu404, and His409. Zn(2+) is bound at residue Asp350. His409 lines the Zn(2+) pocket.

It belongs to the histidinol dehydrogenase family. Zn(2+) is required as a cofactor.

The enzyme catalyses L-histidinol + 2 NAD(+) + H2O = L-histidine + 2 NADH + 3 H(+). It functions in the pathway amino-acid biosynthesis; L-histidine biosynthesis; L-histidine from 5-phospho-alpha-D-ribose 1-diphosphate: step 9/9. Functionally, catalyzes the sequential NAD-dependent oxidations of L-histidinol to L-histidinaldehyde and then to L-histidine. The chain is Histidinol dehydrogenase from Staphylococcus aureus (strain COL).